The following is a 772-amino-acid chain: Phenylalanine--tRNA ligase beta subunit (772 aa).

The tRNA-binding domain maps to 40-158; that stretch reads IKPSTNLVFA…DHYKTPNQIF (119 aa). The region spanning 397-468 is the B5 domain; sequence SVHNVIKNKI…KKISIQEIKP (72 aa). Mg(2+) contacts are provided by aspartate 446, aspartate 452, glutamate 455, and aspartate 456. Residues 691-772 form the FDX-ACB domain; the sequence is SMYHDVIRDI…QEVNNYLKQF (82 aa).

Belongs to the phenylalanyl-tRNA synthetase beta subunit family. Type 1 subfamily. Tetramer of two alpha and two beta subunits. The cofactor is Mg(2+).

The protein localises to the cytoplasm. It carries out the reaction tRNA(Phe) + L-phenylalanine + ATP = L-phenylalanyl-tRNA(Phe) + AMP + diphosphate + H(+). This is Phenylalanine--tRNA ligase beta subunit (pheT) from Ureaplasma parvum serovar 3 (strain ATCC 700970).